Here is a 331-residue protein sequence, read N- to C-terminus: D-lactate/D-glycerate dehydrogenase (331 aa).

Residues 154 to 155 (RI), Asp-174, 205 to 206 (VP), Asn-211, 232 to 234 (FAR), and Asp-258 each bind NAD(+). The active site involves Arg-234. Glu-263 is an active-site residue. The active-site Proton donor is the His-295.

Belongs to the D-isomer specific 2-hydroxyacid dehydrogenase family. As to quaternary structure, homodimer.

It carries out the reaction (R)-lactate + NAD(+) = pyruvate + NADH + H(+). The enzyme catalyses (R)-glycerate + NAD(+) = 3-hydroxypyruvate + NADH + H(+). In terms of biological role, has both D-lactate and D-glycerate dehydrogenase activities. Equally active on pyruvate and hydroxypyruvate. This is D-lactate/D-glycerate dehydrogenase from Pediococcus acidilactici.